Consider the following 702-residue polypeptide: MPRTRVNLQKSEANDRSFTISSLEFCLSQLRKADPNLVKKAIASGDGLTESKNDVSTRLSEAHRYSVQQCLDNSEQLAQLHNQLVHCDNVFERLQATLYSFQDNLGSIGQDMKNLQLQSHHIHQELENRQKVRVELSQFVDDIAVSQTMMKTINDTDANDRGFLEALHELHHKITLILQRGNGDAVAVNDTMPILEGLKLKAVVKVREWLLQKMFQFRKPLSNYQVFQHQLLKCRFFYEFLLHHDLISAKELQDEYIDTISKMFFTYFKAYATRLFKLAMKDVATKEDALGSIDFAKPAGLGAIFSSKQHVVRNKATVFSIGQRHQILSDDFLGALIVPHAATQNHQSYQFEALFRSIQLAFVDHYSHEYLFITDFFLVSNDEAIELHNKAMARAMSVVLKSCEEQIALSWDAISLHLCICLCDKFTEVLAEREVPEVSDYWNTVTSFLWTRLNLVMSQHYESVKSVDLKKLMHSGSLDARPHFIVRRYAELTSAHLMIAKASGKEMGAKMEAVLENSEDSIEQLLTRMSAMQQTQKNKHVFLINNYDLILSIIDNEESKHTKIYAIVHELEQKSIDDFVEEMLEPHIGYMIKFVNECESLIVQGHTQLLVRYNDKVGTVVANFNAKWRPAVDSINSECIQLFTNFSLGTTILQTIFTKYVQYINRFTKILSHDVFAKNPVCSQLVNVHQVMLEIKRFKPAY.

Residues 505-535 (KEMGAKMEAVLENSEDSIEQLLTRMSAMQQT) are a coiled coil.

This sequence belongs to the VPS52 family. Component of the Golgi-associated retrograde protein (GARP) complex, also called VFT (VPS fifty-three) complex, composed of vps-51, vps-52, vps-53 and vps-54. Within the complex interacts with vps-53 and vps-54. Interacts with the small GTPases rab-6.1 and rab-6.2. Ubiquitously expressed, with particularly strong expression in neuronal cells. Specifically expressed in head and tail neurons and in the pharynx and ventral cord motor neurons.

It localises to the golgi apparatus. The protein localises to the trans-Golgi network. It is found in the perikaryon. The protein resides in the cytoplasm. Its subcellular location is the perinuclear region. Its function is as follows. Acts as a component of the GARP complex that is involved in retrograde transport from early and late endosomes to the trans-Golgi network (TGN). The GARP complex facilitates tethering as well as SNARE complex assembly at the Golgi. Plays a role in the trafficking of cargo to dense-core vesicles, probably through association with the EARP-interacting protein eipr-1. Important for neuronal function. This chain is Vacuolar protein sorting-associated protein 52 homolog, found in Caenorhabditis elegans.